Reading from the N-terminus, the 348-residue chain is Outer membrane protein A (348 aa).

Residues 1-21 (MKKTAIAIAVALAGFATVAQA) form the signal peptide. The next 8 beta stranded transmembrane spans lie at 27 to 37 (TWYTGAKLGWS), 55 to 66 (QLGAGAFGGYQV), 70 to 78 (VGFEMGYDW), 96 to 107 (QGVQLTAKLGYP), 112 to 120 (LDIYTRLGG), 146 to 155 (PVFAGGVEYA), 160 to 167 (IATRLEYQ), and 186 to 194 (LLSLGVSYR). A hinge-like region spans residues 201-210 (APVVAPAPAP). 3 tandem repeats follow at residues 205-206 (AP), 207-208 (AP), and 209-210 (AP). Residues 205 to 210 (APAPAP) form a 3 X 2 AA tandem repeats of A-P region. The OmpA-like domain maps to 212–340 (VQTKHFTLKS…RVEIEVKGIK (129 aa)). An intrachain disulfide couples Cys-313 to Cys-325.

Belongs to the outer membrane OOP (TC 1.B.6) superfamily. OmpA family. As to quaternary structure, monomer and homodimer. (Microbial infection) Upon infection with phage Sf6 associates with the mature bacteriophage capsid. Was originally suggested to be within the bacteriophage capsid. This has been disproven.

The protein localises to the extracellular vesicle. Its subcellular location is the cell outer membrane. Functionally, with TolR probably plays a role in maintaining the position of the peptidoglycan cell wall in the periplasm. Acts as a porin with low permeability that allows slow penetration of small solutes; an internal gate slows down solute passage. Its function is as follows. Required for conjugation with F-type plasmids; probably serves as the mating receptor on recipient cells. In terms of biological role, (Microbial infection) Serves as a secondary receptor during phage Sf6 infection; infection requires both lipopolysaccharide (LPS) and the OmpA beta-barrel. This chain is Outer membrane protein A, found in Shigella flexneri.